Consider the following 614-residue polypeptide: UvrABC system protein C (614 aa).

Residues Asp12–Val89 form the GIY-YIG domain. A UVR domain is found at Ala198 to Val233.

This sequence belongs to the UvrC family. As to quaternary structure, interacts with UvrB in an incision complex.

Its subcellular location is the cytoplasm. Its function is as follows. The UvrABC repair system catalyzes the recognition and processing of DNA lesions. UvrC both incises the 5' and 3' sides of the lesion. The N-terminal half is responsible for the 3' incision and the C-terminal half is responsible for the 5' incision. The chain is UvrABC system protein C from Desulforudis audaxviator (strain MP104C).